The following is a 136-amino-acid chain: Nucleoside diphosphate kinase (136 aa).

ATP is bound by residues K10, F58, R86, T92, R104, and N114. H117 acts as the Pros-phosphohistidine intermediate in catalysis.

Belongs to the NDK family. In terms of assembly, homotetramer. Mg(2+) serves as cofactor.

The protein resides in the cytoplasm. It catalyses the reaction a 2'-deoxyribonucleoside 5'-diphosphate + ATP = a 2'-deoxyribonucleoside 5'-triphosphate + ADP. The catalysed reaction is a ribonucleoside 5'-diphosphate + ATP = a ribonucleoside 5'-triphosphate + ADP. Major role in the synthesis of nucleoside triphosphates other than ATP. The ATP gamma phosphate is transferred to the NDP beta phosphate via a ping-pong mechanism, using a phosphorylated active-site intermediate. This chain is Nucleoside diphosphate kinase, found in Mycobacteroides abscessus (strain ATCC 19977 / DSM 44196 / CCUG 20993 / CIP 104536 / JCM 13569 / NCTC 13031 / TMC 1543 / L948) (Mycobacterium abscessus).